A 111-amino-acid chain; its full sequence is Phosphoribosyl-ATP pyrophosphatase (111 aa).

It belongs to the PRA-PH family.

It localises to the cytoplasm. The enzyme catalyses 1-(5-phospho-beta-D-ribosyl)-ATP + H2O = 1-(5-phospho-beta-D-ribosyl)-5'-AMP + diphosphate + H(+). It participates in amino-acid biosynthesis; L-histidine biosynthesis; L-histidine from 5-phospho-alpha-D-ribose 1-diphosphate: step 2/9. The chain is Phosphoribosyl-ATP pyrophosphatase (hisE) from Pseudomonas aeruginosa (strain ATCC 15692 / DSM 22644 / CIP 104116 / JCM 14847 / LMG 12228 / 1C / PRS 101 / PAO1).